The sequence spans 348 residues: Xaa-Pro dipeptidase (348 aa).

Residues Asp-209, Asp-220, His-284, Glu-313, and Glu-327 each contribute to the Co(2+) site.

The protein belongs to the peptidase M24B family. Archaeal-type prolidase subfamily. Homodimer. It depends on Co(2+) as a cofactor. Mn(2+) is required as a cofactor.

The protein localises to the cytoplasm. It catalyses the reaction Xaa-L-Pro dipeptide + H2O = an L-alpha-amino acid + L-proline. In terms of biological role, splits dipeptides with a prolyl in the C-terminal position and a nonpolar amino acid at the N-terminal position. This chain is Xaa-Pro dipeptidase (pepQ), found in Pyrococcus furiosus (strain ATCC 43587 / DSM 3638 / JCM 8422 / Vc1).